Here is a 169-residue protein sequence, read N- to C-terminus: MQIETLTVEPLTKEAFAPFGDVIEVEGAQLRLINNGTTERYHDLARMEAAGTQTRVLINIFRGQSFAAPIDIMMMERHPFGSQAFIPLNGRPFLVVVAEDAGAGPARPRAFLARGDQGVNYLRNIWHHPLLALEQKSDFLVVDRAGREDNLEEYFFSDYAYRIETTQTA.

Belongs to the ureidoglycolate lyase family. As to quaternary structure, homodimer. Ni(2+) serves as cofactor.

It carries out the reaction (S)-ureidoglycolate = urea + glyoxylate. It functions in the pathway nitrogen metabolism; (S)-allantoin degradation. Catalyzes the catabolism of the allantoin degradation intermediate (S)-ureidoglycolate, generating urea and glyoxylate. Involved in the utilization of allantoin as nitrogen source. This is Ureidoglycolate lyase from Brucella abortus biovar 1 (strain 9-941).